Reading from the N-terminus, the 285-residue chain is Urease accessory protein UreD (285 aa).

This sequence belongs to the UreD family. UreD, UreF and UreG form a complex that acts as a GTP-hydrolysis-dependent molecular chaperone, activating the urease apoprotein by helping to assemble the nickel containing metallocenter of UreC. The UreE protein probably delivers the nickel.

It localises to the cytoplasm. Required for maturation of urease via the functional incorporation of the urease nickel metallocenter. In Cytophaga hutchinsonii (strain ATCC 33406 / DSM 1761 / CIP 103989 / NBRC 15051 / NCIMB 9469 / D465), this protein is Urease accessory protein UreD.